Consider the following 294-residue polypeptide: Phosphoribosylaminoimidazole-succinocarboxamide synthase (294 aa).

This sequence belongs to the SAICAR synthetase family.

The catalysed reaction is 5-amino-1-(5-phospho-D-ribosyl)imidazole-4-carboxylate + L-aspartate + ATP = (2S)-2-[5-amino-1-(5-phospho-beta-D-ribosyl)imidazole-4-carboxamido]succinate + ADP + phosphate + 2 H(+). It participates in purine metabolism; IMP biosynthesis via de novo pathway; 5-amino-1-(5-phospho-D-ribosyl)imidazole-4-carboxamide from 5-amino-1-(5-phospho-D-ribosyl)imidazole-4-carboxylate: step 1/2. The polypeptide is Phosphoribosylaminoimidazole-succinocarboxamide synthase (Rhodococcus jostii (strain RHA1)).